A 387-amino-acid polypeptide reads, in one-letter code: Radial spoke protein 14 (387 aa).

8 ARM repeats span residues 24 to 67, 69 to 109, 111 to 150, 154 to 198, 204 to 244, 245 to 286, 289 to 328, and 330 to 370; these read KALP…ELLS, PVNH…LLAA, EVGA…EAAR, TRRA…TCTQ, GILS…ALAT, REDA…AITI, EGKY…NVAE, and PEAR…QCRF.

This sequence belongs to the flagellar radial spoke RSP14 family.

Its subcellular location is the cytoplasm. The protein localises to the cytoskeleton. It is found in the flagellum axoneme. The sequence is that of Radial spoke protein 14 (RSP14) from Chlamydomonas reinhardtii (Chlamydomonas smithii).